The chain runs to 481 residues: UDP-N-acetylmuramoyl-L-alanyl-D-glutamate--L-lysine ligase (481 aa).

S42 contacts UDP-N-acetyl-alpha-D-muramoyl-L-alanyl-D-glutamate. 118-124 (GTKGKTT) serves as a coordination point for ATP. Residues 160–161 (TT), S187, and R195 contribute to the UDP-N-acetyl-alpha-D-muramoyl-L-alanyl-D-glutamate site. An N6-carboxylysine modification is found at K229. The L-lysine recognition motif signature appears at 404–407 (DDPN).

Belongs to the MurCDEF family. MurE subfamily. Post-translationally, carboxylation is probably crucial for Mg(2+) binding and, consequently, for the gamma-phosphate positioning of ATP.

Its subcellular location is the cytoplasm. It catalyses the reaction UDP-N-acetyl-alpha-D-muramoyl-L-alanyl-D-glutamate + L-lysine + ATP = UDP-N-acetyl-alpha-D-muramoyl-L-alanyl-gamma-D-glutamyl-L-lysine + ADP + phosphate + H(+). Its pathway is cell wall biogenesis; peptidoglycan biosynthesis. In terms of biological role, catalyzes the addition of L-lysine to the nucleotide precursor UDP-N-acetylmuramoyl-L-alanyl-D-glutamate (UMAG) in the biosynthesis of bacterial cell-wall peptidoglycan. The protein is UDP-N-acetylmuramoyl-L-alanyl-D-glutamate--L-lysine ligase of Streptococcus suis (strain 98HAH33).